Here is a 1005-residue protein sequence, read N- to C-terminus: Retinoblastoma-related protein (1005 aa).

The tract at residues 404 to 605 (TPVSTAMTTA…EKGSSMYNSL (202 aa)) is domain A. Positions 404 to 853 (TPVSTAMTTA…NEIFIPSVKP (450 aa)) are pocket. The interval 606 to 722 (TIARPNLSNE…HPTRGETCAE (117 aa)) is spacer. The domain B stretch occupies residues 723 to 853 (TAVNLFFSKI…NEIFIPSVKP (131 aa)). Polar residues predominate over residues 863 to 873 (VPKNPNNQVSE). Residues 863–899 (VPKNPNNQVSETNKKDESGPCPCPGSPKVSSFPSLPD) are disordered.

Belongs to the retinoblastoma protein (RB) family.

Its subcellular location is the nucleus. Functionally, regulator of biological processes that recruits a histone deacetylase to control gene transcription. May play a role in the entry into mitosis, negatively regulating the cell proliferation. Formation of stable complexes with geminiviridae replication-associated proteins may create a cellular environment which favors viral DNA replication. The chain is Retinoblastoma-related protein (RBR) from Pilosella piloselloides (Glaucous king-devil hawkweed).